Here is a 733-residue protein sequence, read N- to C-terminus: Hexamerin (733 aa).

Positions 1–17 (MKTALVLILATATLAVA) are cleaved as a signal peptide. N-linked (GlcNAc...) asparagine glycosylation is found at Asn-199, Asn-234, and Asn-431.

Belongs to the hemocyanin family. As to quaternary structure, homohexamer.

It is found in the secreted. The protein localises to the extracellular space. In terms of biological role, larval storage protein (LSP) which may serve as a store of amino acids for synthesis of adult proteins. This is Hexamerin from Blaberus discoidalis (Tropical cockroach).